Reading from the N-terminus, the 215-residue chain is Octanoyltransferase (215 aa).

The BPL/LPL catalytic domain occupies 33 to 209; that stretch reads PDTPDQLWLV…QFARKLGYET (177 aa). Substrate is bound by residues 72–79, 139–141, and 152–154; these read RGGQVTYH, SLG, and GLA. The active-site Acyl-thioester intermediate is the Cys170.

Belongs to the LipB family.

It is found in the cytoplasm. The enzyme catalyses octanoyl-[ACP] + L-lysyl-[protein] = N(6)-octanoyl-L-lysyl-[protein] + holo-[ACP] + H(+). It functions in the pathway protein modification; protein lipoylation via endogenous pathway; protein N(6)-(lipoyl)lysine from octanoyl-[acyl-carrier-protein]: step 1/2. Its function is as follows. Catalyzes the transfer of endogenously produced octanoic acid from octanoyl-acyl-carrier-protein onto the lipoyl domains of lipoate-dependent enzymes. Lipoyl-ACP can also act as a substrate although octanoyl-ACP is likely to be the physiological substrate. In Cellvibrio japonicus (strain Ueda107) (Pseudomonas fluorescens subsp. cellulosa), this protein is Octanoyltransferase.